Reading from the N-terminus, the 40-residue chain is Photosystem II reaction center protein T (40 aa).

A helical transmembrane segment spans residues 3-23; that stretch reads ALVYTFLLVGTLGIIFFAIFF.

The protein belongs to the PsbT family. PSII is composed of 1 copy each of membrane proteins PsbA, PsbB, PsbC, PsbD, PsbE, PsbF, PsbH, PsbI, PsbJ, PsbK, PsbL, PsbM, PsbT, PsbY, PsbZ, Psb30/Ycf12, at least 3 peripheral proteins of the oxygen-evolving complex and a large number of cofactors. It forms dimeric complexes.

Its subcellular location is the plastid. It localises to the chloroplast thylakoid membrane. Its function is as follows. Found at the monomer-monomer interface of the photosystem II (PS II) dimer, plays a role in assembly and dimerization of PSII. PSII is a light-driven water plastoquinone oxidoreductase, using light energy to abstract electrons from H(2)O, generating a proton gradient subsequently used for ATP formation. The sequence is that of Photosystem II reaction center protein T from Anthoceros angustus (Hornwort).